The following is a 295-amino-acid chain: GTPase Era (295 aa).

The Era-type G domain maps to 3–170; it reads KSGFVTIVGR…VDLMKTELPE (168 aa). The tract at residues 11-18 is G1; sequence GRPNVGKS. 11–18 is a binding site for GTP; the sequence is GRPNVGKS. Residues 37–41 form a G2 region; it reads QTTRN. Residues 58 to 61 are G3; sequence DTPG. Residues 58 to 62 and 120 to 123 each bind GTP; these read DTPGI and NKID. Residues 120–123 are G4; the sequence is NKID. Residues 149-151 form a G5 region; it reads IAA. The region spanning 201-278 is the KH type-2 domain; sequence LRDEVPHGIA…NVKIWVKVRK (78 aa).

It belongs to the TRAFAC class TrmE-Era-EngA-EngB-Septin-like GTPase superfamily. Era GTPase family. In terms of assembly, monomer.

Its subcellular location is the cytoplasm. It localises to the cell membrane. An essential GTPase that binds both GDP and GTP, with rapid nucleotide exchange. Plays a role in 16S rRNA processing and 30S ribosomal subunit biogenesis and possibly also in cell cycle regulation and energy metabolism. This chain is GTPase Era, found in Clostridium botulinum (strain Eklund 17B / Type B).